A 107-amino-acid polypeptide reads, in one-letter code: Iron-sulfur cluster assembly protein CyaY (107 aa).

The protein belongs to the frataxin family.

Its function is as follows. Involved in iron-sulfur (Fe-S) cluster assembly. May act as a regulator of Fe-S biogenesis. The sequence is that of Iron-sulfur cluster assembly protein CyaY from Neisseria meningitidis serogroup B (strain ATCC BAA-335 / MC58).